Here is a 373-residue protein sequence, read N- to C-terminus: MRFQVEREVLAEGIGWVARGLAVRPSVPILSGVVVNAEGDTLTLSGFDYEVSTRVELKANVEESGTVLIPGRRLADIAKVLPDVPIEFNVDQTKVYVQCDSNSFVLNALPLDEYPTLPKLPTVCGSVEGDQFARAVSQVAVVASRDDALPVLTGIGVNFDGEIMKLNATDRYRFAIRELAWKPEGTPSSSSVLVPARTLLDFAKSLNKGDLVKIALSDEGNLLGLHAGTRQMTCRLLEGTLPDYEKLFPKEFTSFGAVEVSRLVEALKRVSLVLERNSSVALDFTDGELVLQAGGADDDRATSRMAASLEGESIDIAFNPSFLLDGLTNLDASWAQFSFTSSNGKAVIMGKSSVDAEADTSARYLVMPVRFHR.

Belongs to the beta sliding clamp family. As to quaternary structure, forms a ring-shaped head-to-tail homodimer around DNA which binds and tethers DNA polymerases and other proteins to the DNA. The DNA replisome complex has a single clamp-loading complex (3 tau and 1 each of delta, delta', psi and chi subunits) which binds 3 Pol III cores (1 core on the leading strand and 2 on the lagging strand) each with a beta sliding clamp dimer. Additional proteins in the replisome are other copies of gamma, psi and chi, Ssb, DNA helicase and RNA primase.

It is found in the cytoplasm. In terms of biological role, a homolog of the beta sliding clamp protein encoded within the biosynthetic cluster for griselimycin synthesis. Upon expression in S.coelicolor A3(2), which is susceptible to this antibiotic, confers resistance to griselimycin. The beta sliding clamp confers DNA tethering and processivity to DNA polymerases and other proteins. Acts as a clamp, forming a ring around DNA (a reaction catalyzed by the clamp-loading complex) which diffuses in an ATP-independent manner freely and bidirectionally along dsDNA. Initially characterized for its ability to contact the catalytic subunit of DNA polymerase III (Pol III), a complex, multichain enzyme responsible for most of the replicative synthesis in bacteria; Pol III exhibits 3'-5' exonuclease proofreading activity. The beta chain is required for initiation of replication as well as for processivity of DNA replication. This Streptomyces muensis protein is Beta sliding clamp homolog GriR.